A 95-amino-acid polypeptide reads, in one-letter code: UPF0235 protein Pcar_0617 (95 aa).

Belongs to the UPF0235 family.

The chain is UPF0235 protein Pcar_0617 from Syntrophotalea carbinolica (strain DSM 2380 / NBRC 103641 / GraBd1) (Pelobacter carbinolicus).